The primary structure comprises 369 residues: Biglycan (369 aa).

An N-terminal signal peptide occupies residues 1–16 (MWPLWLVASLLALSQA). Residues 17-37 (LPFEQKGFWDFTLDDGLPMLN) constitute a propeptide that is removed on maturation. Residues Ser-42 and Ser-48 are each glycosylated (O-linked (Xyl...) (glycosaminoglycan) serine). Disulfide bonds link Cys-64/Cys-70 and Cys-68/Cys-77. LRR repeat units follow at residues 83–103 (KAVPKEISPDTMLLDLQNNDI), 104–127 (SELRADDFKGLHHLYALVLVNNKI), 128–151 (SKIHEKAFSPLRKLQKLYISKNHL), 152–172 (VEIPPNLPSSLVELRIHDNRI), 173–196 (RKVPKGVFSGLRNMNCIEMGGNPL), 197–221 (ENSGFEPGAFDGLKLNYLRISEAKL), 222–242 (TGIPKDLPETLNELHLDHNKI), 243–266 (QAIELEDLLRYSKLYRLGLGHNQI), 267–290 (RMIENGSLSFLPTLRELHLDNNKL), 291–313 (SRVPSGLPDLKLLQVVYLHTNNI), 314–343 (TKVGVNDFCPVGFGVKRAYYNGISLFNNPV), and 344–369 (PYWEVQPATFRCVTDRLAIQFGNYKK). Asn-271 and Asn-312 each carry an N-linked (GlcNAc...) asparagine glycan. Cys-322 and Cys-355 are oxidised to a cystine.

Belongs to the small leucine-rich proteoglycan (SLRP) family. SLRP class I subfamily. As to quaternary structure, homodimer. Forms a ternary complex with MFAP2 and ELN. Post-translationally, the two attached glycosaminoglycan chains can be either chondroitin sulfate or dermatan sulfate.

It localises to the secreted. The protein resides in the extracellular space. The protein localises to the extracellular matrix. In terms of biological role, may be involved in collagen fiber assembly. This chain is Biglycan (BGN), found in Canis lupus familiaris (Dog).